The following is a 362-amino-acid chain: Histidine protein methyltransferase 1 homolog (362 aa).

The interval 18 to 88 (TSLDDGTCVL…EACKHQPSWK (71 aa)) is disordered. A compositionally biased stretch (basic and acidic residues) spans 30-51 (QKGKQDKRQSTERPGLPRDHSW). A compositionally biased stretch (polar residues) spans 52–65 (KCSSLGNAASSEDT). Residues S62 and S67 each carry the phosphoserine modification. Over residues 73–82 (DRSDDPEACK) the composition is skewed to basic and acidic residues. H144 is modified (tele-methylhistidine). S-adenosyl-L-methionine-binding positions include 158–162 (IWECT), G185, and 206–208 (QDY). Residues 237-243 (PDGKRQR) carry the Nuclear localization signal motif. Residues 259 to 261 (GEW) and S283 each bind S-adenosyl-L-methionine.

The protein belongs to the methyltransferase superfamily. METTL18 family. As to quaternary structure, interacts with GRWD1 and members of the heat shock protein 90 and 70 families; these proteins may possibly be methylation substrates for the enzyme. Monomethylated at His-144 through automethylation. Automethylation at His-144 positively regulates the methyltransferase activity toward RPL3. Probably methylated on other residues.

Its subcellular location is the cytoplasm. The protein localises to the cytosol. The protein resides in the nucleus. It is found in the nucleolus. The enzyme catalyses L-histidyl-[protein] + S-adenosyl-L-methionine = N(tele)-methyl-L-histidyl-[protein] + S-adenosyl-L-homocysteine + H(+). In terms of biological role, protein-L-histidine N-tele-methyltransferase that specifically monomethylates RPL3, thereby regulating translation elongation. Histidine methylation of RPL3 regulates translation elongation by slowing ribosome traversal on tyrosine codons: slower elongation provides enough time for proper folding of synthesized proteins and prevents cellular aggregation of tyrosine-rich proteins. The protein is Histidine protein methyltransferase 1 homolog of Mus musculus (Mouse).